We begin with the raw amino-acid sequence, 275 residues long: ATP synthase subunit a (275 aa).

The next 7 helical transmembrane spans lie at 46–66 (RLML…VIAM), 104–124 (FLPV…ASII), 135–155 (IGMP…VGIK), 166–186 (SIVV…IEFI), 204–224 (MLAG…FFFV), 231–251 (IFGV…LLVI), and 252–272 (FLQA…ALHA).

This sequence belongs to the ATPase A chain family. F-type ATPases have 2 components, CF(1) - the catalytic core - and CF(0) - the membrane proton channel. CF(1) has five subunits: alpha(3), beta(3), gamma(1), delta(1), epsilon(1). CF(0) has three main subunits: a(1), b(2) and c(9-12). The alpha and beta chains form an alternating ring which encloses part of the gamma chain. CF(1) is attached to CF(0) by a central stalk formed by the gamma and epsilon chains, while a peripheral stalk is formed by the delta and b chains.

It localises to the cell membrane. Functionally, key component of the proton channel; it plays a direct role in the translocation of protons across the membrane. The sequence is that of ATP synthase subunit a from Rhodococcus erythropolis (strain PR4 / NBRC 100887).